The following is an 836-amino-acid chain: Tuftelin-interacting protein 11 (836 aa).

The segment covering 1–13 (MSLSHLYRDGEGH) has biased composition (basic and acidic residues). Disordered stretches follow at residues 1–31 (MSLS…DWDL), 54–73 (WAER…RARD), and 85–136 (LKKG…AGGT). The segment at 1 to 50 (MSLSHLYRDGEGHMDDDEDERENFEITDWDLQNEFNPNRQRHWQTKEEAT) is required for interaction with DHX15. Ser-2 is subject to Phosphoserine. Residues 14 to 28 (MDDDEDERENFEITD) show a composition bias toward acidic residues. The span at 54 to 64 (WAERDSDEERP) shows a compositional bias: basic and acidic residues. Residues Ser-59 and Ser-98 each carry the phosphoserine modification. The segment covering 91–102 (EEAELEDSDDEE) has biased composition (acidic residues). Positions 103-116 (KPVKQDEFPKDFGP) are enriched in basic and acidic residues. Ser-144 bears the Phosphoserine mark. The G-patch domain occupies 149–195 (TKGIGQKLLQKMGYVPGRGLGKNAQGIINPIEAKQRKGKGAVGAYGS). A disordered region spans residues 183–236 (QRKGKGAVGAYGSERTTQSLQDFPVVDSEEEAEEEFQKELSQWRKDPSGSKKKP). At Ser-210 the chain carries Phosphoserine. A compositionally biased stretch (basic and acidic residues) spans 217–231 (EFQKELSQWRKDPSG). A Nuclear localization signal motif is present at residues 699–704 (VKDKFN). The interval 709 to 733 (IMNRAVSSNVGAYMQPGARENIAYL) is required for nuclear speckle localization.

It belongs to the TFP11/STIP family. As to quaternary structure, identified in the spliceosome C complex. Found in the Intron Large (IL) complex, a post-mRNA release spliceosomal complex containing the excised intron, U2, U5 and U6 snRNPs, and splicing factors. Interacts with TUFT1. Interacts with DHX15; indicative for a recruitment of DHX15 to the IL complex. Interacts with GCFC2.

It localises to the cytoplasm. It is found in the nucleus. Its function is as follows. Involved in pre-mRNA splicing, specifically in spliceosome disassembly during late-stage splicing events. Intron turnover seems to proceed through reactions in two lariat-intron associated complexes termed Intron Large (IL) and Intron Small (IS). In cooperation with DHX15 seems to mediate the transition of the U2, U5 and U6 snRNP-containing IL complex to the snRNP-free IS complex leading to efficient debranching and turnover of excised introns. May play a role in the differentiation of ameloblasts and odontoblasts or in the forming of the enamel extracellular matrix. This chain is Tuftelin-interacting protein 11 (TFIP11), found in Sus scrofa (Pig).